A 123-amino-acid chain; its full sequence is Large ribosomal subunit protein uL18 (123 aa).

Belongs to the universal ribosomal protein uL18 family. As to quaternary structure, part of the 50S ribosomal subunit; part of the 5S rRNA/L5/L18/L25 subcomplex. Contacts the 5S and 23S rRNAs.

In terms of biological role, this is one of the proteins that bind and probably mediate the attachment of the 5S RNA into the large ribosomal subunit, where it forms part of the central protuberance. This is Large ribosomal subunit protein uL18 from Chlamydia abortus (strain DSM 27085 / S26/3) (Chlamydophila abortus).